The chain runs to 148 residues: Endoribonuclease YbeY (148 aa).

His-113, His-117, and His-123 together coordinate Zn(2+).

The protein belongs to the endoribonuclease YbeY family. It depends on Zn(2+) as a cofactor.

It is found in the cytoplasm. In terms of biological role, single strand-specific metallo-endoribonuclease involved in late-stage 70S ribosome quality control and in maturation of the 3' terminus of the 16S rRNA. This is Endoribonuclease YbeY from Borrelia hermsii (strain HS1 / DAH).